We begin with the raw amino-acid sequence, 234 residues long: Ubiquitin domain-containing protein 1 (234 aa).

Residues methionine 1–aspartate 47 form a disordered region. The segment covering serine 12–glycine 21 has biased composition (polar residues). Residues leucine 32–serine 41 are compositionally biased toward basic and acidic residues. A Ubiquitin-like domain is found at cysteine 152–proline 227.

Its function is as follows. May be involved in the regulation of cellular senescence through a positive feedback loop with TP53. The chain is Ubiquitin domain-containing protein 1 (ubtd1) from Xenopus laevis (African clawed frog).